The sequence spans 505 residues: Cytochrome P450 monooxygenase efuB (505 aa).

The helical transmembrane segment at 12 to 34 (GFWPTVAGTVATYLFYQIVATVY) threads the bilayer. Cysteine 450 contributes to the heme binding site.

This sequence belongs to the cytochrome P450 family. Heme is required as a cofactor.

The protein localises to the membrane. It participates in secondary metabolite biosynthesis; terpenoid biosynthesis. Its function is as follows. Cytochrome P450 monooxygenase; part of the gene cluster that mediates the biosynthesis of enfumafungin, a glycosylated fernene-type triterpenoid with potent antifungal activity, mediated by its interaction with beta-1,3-glucan synthase and the fungal cell wall. The pathway begins with the terpene cyclase-glycosyl transferase fusion protein that most likely uses 2,3-oxidosqualene as substrate and catalyzes glycosylation immediately after cyclization. The fernene glycoside then could be processed by the desaturase efuI which catalyzes isomerization of a double bond established by efuA to form the core structure. The latter would then undergo a series of hydroxylations in unknown order at C-2, C-19, C-23 and C-25, which would be catalyzed by two of the three cytochrome P450 monooxygenases efuB, efuG or efuH. The hydroxy-group at C-25 becomes oxidized by the dehydrogenase efuE to enable a spontaneous, non-enzymatic hemiacetal formation with C-23. After hydroxylation at C-2, acetylation by the acetyltransferase efuC takes place. The final steps in enfumafungin biosynthesis require expansion of the 5-membered ring by lactonization via a Baeyer-Villiger reaction mediated by one of the BGC's cytochrome P450 monooxygenases (efuB, efuG or efuH) followed by ring cleavage. This type of reaction would establish a double bond between C-20 and C-21 which could be reduced by the reductase efuL to form the final product. This Hormonema carpetanum protein is Cytochrome P450 monooxygenase efuB.